A 624-amino-acid polypeptide reads, in one-letter code: tRNA uridine 5-carboxymethylaminomethyl modification enzyme MnmG (624 aa).

FAD-binding positions include glycine 13 to glycine 18, valine 125, and serine 180. Glycine 272–phenylalanine 286 is a binding site for NAD(+). Glutamine 369 lines the FAD pocket.

This sequence belongs to the MnmG family. In terms of assembly, homodimer. Heterotetramer of two MnmE and two MnmG subunits. The cofactor is FAD.

The protein localises to the cytoplasm. NAD-binding protein involved in the addition of a carboxymethylaminomethyl (cmnm) group at the wobble position (U34) of certain tRNAs, forming tRNA-cmnm(5)s(2)U34. The chain is tRNA uridine 5-carboxymethylaminomethyl modification enzyme MnmG from Thermodesulfovibrio yellowstonii (strain ATCC 51303 / DSM 11347 / YP87).